We begin with the raw amino-acid sequence, 417 residues long: Peptidyl-Asp metalloendopeptidase (417 aa).

An N-terminal signal peptide occupies residues 1–25 (MLSRSIGKAAGGLVLGLSVAAAAHA). Residue histidine 327 participates in Zn(2+) binding. Residue glutamate 328 is part of the active site. Residues histidine 331 and histidine 337 each coordinate Zn(2+).

This sequence belongs to the peptidase M72 family. The cofactor is Zn(2+).

The enzyme catalyses Cleavage of Xaa-|-Asp, Xaa-|-Glu and Xaa-|-cysteic acid bonds.. Its function is as follows. Metalloprotease, specifically cleaves on the N-terminal side of aspartyl, glutamyl and cysteic acid residues. This chain is Peptidyl-Asp metalloendopeptidase, found in Stenotrophomonas maltophilia (strain R551-3).